We begin with the raw amino-acid sequence, 281 residues long: Large ribosomal subunit protein uL2 (281 aa).

Positions Arg-210 to Arg-281 are disordered. A compositionally biased stretch (basic residues) spans Thr-254 to Arg-281.

It belongs to the universal ribosomal protein uL2 family. As to quaternary structure, part of the 50S ribosomal subunit. Forms a bridge to the 30S subunit in the 70S ribosome.

In terms of biological role, one of the primary rRNA binding proteins. Required for association of the 30S and 50S subunits to form the 70S ribosome, for tRNA binding and peptide bond formation. It has been suggested to have peptidyltransferase activity; this is somewhat controversial. Makes several contacts with the 16S rRNA in the 70S ribosome. This chain is Large ribosomal subunit protein uL2, found in Limosilactobacillus reuteri subsp. reuteri (strain JCM 1112) (Lactobacillus reuteri).